Reading from the N-terminus, the 638-residue chain is Threonine--tRNA ligase (638 aa).

One can recognise a TGS domain in the interval Met-1–Thr-61. Residues Asp-242–Pro-533 form a catalytic region. Zn(2+)-binding residues include Cys-333, His-384, and His-510.

Belongs to the class-II aminoacyl-tRNA synthetase family. As to quaternary structure, homodimer. Requires Zn(2+) as cofactor.

It is found in the cytoplasm. The enzyme catalyses tRNA(Thr) + L-threonine + ATP = L-threonyl-tRNA(Thr) + AMP + diphosphate + H(+). In terms of biological role, catalyzes the attachment of threonine to tRNA(Thr) in a two-step reaction: L-threonine is first activated by ATP to form Thr-AMP and then transferred to the acceptor end of tRNA(Thr). Also edits incorrectly charged L-seryl-tRNA(Thr). In Dechloromonas aromatica (strain RCB), this protein is Threonine--tRNA ligase.